A 296-amino-acid chain; its full sequence is mRNA 3'-end-processing protein RNA15 (296 aa).

The region spanning 18-96 (RVVYLGSIPY…RFLKCGYSSN (79 aa)) is the RRM domain. Positions 99–140 (ISGVSQQQQQQYNNINGNNNNNGNNNNNSNGPDFQNSGNANF) are disordered. The span at 100–135 (SGVSQQQQQQYNNINGNNNNNGNNNNNSNGPDFQNS) shows a compositional bias: low complexity.

In terms of assembly, component of the CFIA complex, which is composed of RNA14, RNA15, PCF11 and CLP1. Interacts directly with RNA14. Interacts with polyadenylate-binding protein PAB1.

It is found in the nucleus. Functionally, RNA-binding component of the cleavage factor IA (CFIA) complex, which is involved in the endonucleolytic cleavage during polyadenylation-dependent pre-mRNA 3'-end formation and cooperates with the cleavage factor NAB4/CFIB and the cleavage and polyadenylation factor (CPF) complex. Binds to A-rich RNA sequence elements. In Saccharomyces cerevisiae (strain ATCC 204508 / S288c) (Baker's yeast), this protein is mRNA 3'-end-processing protein RNA15 (RNA15).